We begin with the raw amino-acid sequence, 421 residues long: UPF0415 protein C7orf25 (421 aa).

The protein belongs to the UPF0415 family.

The polypeptide is UPF0415 protein C7orf25 (C7orf25) (Homo sapiens (Human)).